The sequence spans 540 residues: MSKQIEFNETARRAMEIGVDKLADAVKVTLGPRGRNVVLAKSWGGPTVTNDGVTIAREIDLEDPFENLGAQLVKSVATKTNDVAGDGTTTATVLAQALVRAGLRNVAAGANPIALGAGISKAADAVSEALLAAATPVDDKSGIAQVATVSSRDEQIGELVGEAMTKVGHDGVVTVEESSTLNTELEVTEGVGFDKGFISAYFVTDFDSQEAVLEDALVLLHREKVSSLPDLLPLLEKVAEAGKPLLIIAEDVEGEALSTLVVNAIRKTLKAVAVKAPFFGDRRKAFLDDLAVVTGGQVINPDVGLVLREVGLDVLGTARRVVVTKDSTVIVDGGGSADAIADRAKQLRAEIEATDSDWDREKLEERLAKLAGGVAVIKVGAATETDLKKRKEAVEDAVSAAKAAVEEGIVTGGGAALVQARKALDSLRGSVSGDEALGVEVFNSALSAPLYWIATNAGLDGSVVVNKVSELPAGQGFNAATLEFGDLLADGVVDPVKVTRSAVLNAASVARMVLTTETAIVDKPAEEEDHGHGHHHGHAH.

ATP-binding positions include 29–32 (TLGP), 86–90 (DGTTT), G413, 478–480 (NAA), and D494.

Belongs to the chaperonin (HSP60) family. Forms a cylinder of 14 subunits composed of two heptameric rings stacked back-to-back. Interacts with the co-chaperonin GroES.

It is found in the cytoplasm. It catalyses the reaction ATP + H2O + a folded polypeptide = ADP + phosphate + an unfolded polypeptide.. Together with its co-chaperonin GroES, plays an essential role in assisting protein folding. The GroEL-GroES system forms a nano-cage that allows encapsulation of the non-native substrate proteins and provides a physical environment optimized to promote and accelerate protein folding. The sequence is that of Chaperonin GroEL 1 from Mycobacterium sp. (strain JLS).